We begin with the raw amino-acid sequence, 119 residues long: Large ribosomal subunit protein bL20 (119 aa).

This sequence belongs to the bacterial ribosomal protein bL20 family.

In terms of biological role, binds directly to 23S ribosomal RNA and is necessary for the in vitro assembly process of the 50S ribosomal subunit. It is not involved in the protein synthesizing functions of that subunit. This is Large ribosomal subunit protein bL20 from Nitrobacter winogradskyi (strain ATCC 25391 / DSM 10237 / CIP 104748 / NCIMB 11846 / Nb-255).